Here is a 100-residue protein sequence, read N- to C-terminus: Urease subunit gamma (100 aa).

This sequence belongs to the urease gamma subunit family. Heterotrimer of UreA (gamma), UreB (beta) and UreC (alpha) subunits. Three heterotrimers associate to form the active enzyme.

The protein localises to the cytoplasm. It carries out the reaction urea + 2 H2O + H(+) = hydrogencarbonate + 2 NH4(+). The protein operates within nitrogen metabolism; urea degradation; CO(2) and NH(3) from urea (urease route): step 1/1. The chain is Urease subunit gamma from Mycobacterium sp. (strain JLS).